A 251-amino-acid chain; its full sequence is Large ribosomal subunit protein uL4 (251 aa).

Belongs to the universal ribosomal protein uL4 family. In terms of assembly, part of the 50S ribosomal subunit.

Its function is as follows. One of the primary rRNA binding proteins, this protein initially binds near the 5'-end of the 23S rRNA. It is important during the early stages of 50S assembly. It makes multiple contacts with different domains of the 23S rRNA in the assembled 50S subunit and ribosome. Forms part of the polypeptide exit tunnel. This is Large ribosomal subunit protein uL4 from Methanothrix thermoacetophila (strain DSM 6194 / JCM 14653 / NBRC 101360 / PT) (Methanosaeta thermophila).